The chain runs to 235 residues: Fibrillarin-like rRNA/tRNA 2'-O-methyltransferase (235 aa).

S-adenosyl-L-methionine contacts are provided by residues 91-92 (TT), 110-111 (EF), 137-138 (DA), and 157-160 (DVAQ).

It belongs to the methyltransferase superfamily. Fibrillarin family. Interacts with nop5. Component of box C/D small ribonucleoprotein (sRNP) particles that contain rpl7ae, FlpA and nop5, plus a guide RNA.

Functionally, involved in pre-rRNA and tRNA processing. Utilizes the methyl donor S-adenosyl-L-methionine to catalyze the site-specific 2'-hydroxyl methylation of ribose moieties in rRNA and tRNA. Site specificity is provided by a guide RNA that base pairs with the substrate. Methylation occurs at a characteristic distance from the sequence involved in base pairing with the guide RNA. The polypeptide is Fibrillarin-like rRNA/tRNA 2'-O-methyltransferase (Pyrobaculum aerophilum (strain ATCC 51768 / DSM 7523 / JCM 9630 / CIP 104966 / NBRC 100827 / IM2)).